The primary structure comprises 45 residues: Putative potassium channel blocker (45 aa).

Expressed by the venom gland.

It localises to the secreted. Its function is as follows. Inhibits potassium channels. The sequence is that of Putative potassium channel blocker from Hottentotta tamulus (Eastern Indian scorpion).